We begin with the raw amino-acid sequence, 291 residues long: Probable cell wall amidase LytH (291 aa).

The N-terminal stretch at 1–40 (MKKIEAWLSKKGLKNKRTLIVVIAFVLFIIFLFLLLNSNS) is a signal peptide. The SH3b domain occupies 41 to 105 (EDSGNITITE…WIAGWHTNLD (65 aa)). The disordered stretch occupies residues 118–140 (QGKTIVLDPGHGGSDQGASSNTK). In terms of domain architecture, MurNAc-LAA spans 122–286 (IVLDPGHGGS…LEQAIVDGLK (165 aa)).

The protein belongs to the N-acetylmuramoyl-L-alanine amidase 3 family.

The protein localises to the secreted. Probably involved in cell-wall metabolism. The sequence is that of Probable cell wall amidase LytH (lytH) from Staphylococcus aureus (strain USA300).